The chain runs to 269 residues: UPF0494 membrane protein C1348.01 (269 aa).

4 consecutive transmembrane segments (helical) span residues 107–127 (WPLLIIWSIIIVFAVDKKFEV), 144–164 (IWVPIAIYVCLLVLMLLSLIF), 177–197 (GVIIAVLGMIIAVLGMIIAAL), and 201–221 (ITGLLYFGHWALYKLVILSLG).

Belongs to the UPF0494 family.

The protein resides in the vacuole membrane. This Schizosaccharomyces pombe (strain 972 / ATCC 24843) (Fission yeast) protein is UPF0494 membrane protein C1348.01.